Consider the following 321-residue polypeptide: MATIRVPNEVPSPAQDSETLKQAIRGWGTDEKAIIRVLGQRDQSQRRKIRESFREIYGKDLIDVLSSELSGDFMKAVVSWTYDPAERDARLVNKILNKEKKKKSLENLKVIVEISCTTSPNHLIAVRKAYCSLFDSSLEEHIASSLPFPLAKLLVTLASTFRYDKDRTDAEVATIEAAMLREAIEKKQLDHDHVLYILGTRSIYQLRETFVAYKKNYGVTIDKDVDGCPGDADLRSLLKVAIFCIDTPEKHFAKVVRDSIEGFGTDEDSLTRAIVTRAEIDLMKVRGEYFNMYNTSMDNAITGDISGDYKDFIITLLGSKI.

N-acetylalanine is present on Ala2. Annexin repeat units follow at residues 11–82 (PSPA…SWTY), 83–159 (DPAE…TLAS), 171–243 (EVAT…VAIF), and 247–318 (TPEK…TLLG). Ca(2+) is bound by residues Gly26, Gly28, and Glu68. Thr117 is subject to Phosphothreonine. Ca(2+) is bound by residues Ile260 and Gly264. At Tyr289 the chain carries Phosphotyrosine. A Ca(2+)-binding site is contributed by Asp304.

Belongs to the annexin (TC 1.A.31.1) family. As to expression, expressed mainly in roots and flowers. Lower in stems and leaves.

In Arabidopsis thaliana (Mouse-ear cress), this protein is Annexin D3 (ANN3).